We begin with the raw amino-acid sequence, 311 residues long: MANPLYHKHIISINDLSRDELELVLRTAASLKKTPQPELLKHKVIASCFFEASTRTRLSFETSIHRLGASVVGFSDSSNTSLGKKGETLADTMSVISTYVDAIVMRHPQEGASRLAAQFSGNVPIVNAGDGANQHPTQTLLDLFTIQETQGRLDNINIAMVGDLKYGRTVHSLTQALAKFNGNHFFFIAPDALAMPAYILQMLEEKEIEYSLHESLEEVVPELDILYMTRVQKERLDPSEYANVKAQFILRSSDLTGARDNLKVLHPLPRIDEITTDVDKTPYAYYFQQAGNGIFARQALLALVLNAELAL.

Residues Arg55 and Thr56 each coordinate carbamoyl phosphate. Residue Lys85 coordinates L-aspartate. Carbamoyl phosphate contacts are provided by Arg106, His135, and Gln138. 2 residues coordinate L-aspartate: Arg168 and Arg230. Carbamoyl phosphate contacts are provided by Leu268 and Pro269.

It belongs to the aspartate/ornithine carbamoyltransferase superfamily. ATCase family. As to quaternary structure, heterododecamer (2C3:3R2) of six catalytic PyrB chains organized as two trimers (C3), and six regulatory PyrI chains organized as three dimers (R2).

The enzyme catalyses carbamoyl phosphate + L-aspartate = N-carbamoyl-L-aspartate + phosphate + H(+). The protein operates within pyrimidine metabolism; UMP biosynthesis via de novo pathway; (S)-dihydroorotate from bicarbonate: step 2/3. Functionally, catalyzes the condensation of carbamoyl phosphate and aspartate to form carbamoyl aspartate and inorganic phosphate, the committed step in the de novo pyrimidine nucleotide biosynthesis pathway. The sequence is that of Aspartate carbamoyltransferase catalytic subunit from Yersinia pestis.